We begin with the raw amino-acid sequence, 211 residues long: Putative transposase for insertion sequence element IS402 (211 aa).

The disordered stretch occupies residues 51–71 (RRWGRPKTGPNPTDRARPGSK).

This sequence belongs to the transposase 11 family.

Involved in the transposition of the insertion sequence. The chain is Putative transposase for insertion sequence element IS402 from Burkholderia cepacia (Pseudomonas cepacia).